Consider the following 240-residue polypeptide: Probable metal transport system ATP-binding protein TM_0124 (240 aa).

Positions 4 to 223 (VEVKNLTYRI…LKKIFTDFDI (220 aa)) constitute an ABC transporter domain. An ATP-binding site is contributed by 36-43 (GPNGAGKT).

The protein belongs to the ABC transporter superfamily.

In terms of biological role, part of an ATP-driven transport system TM_0123/TM_0124/TM_0125 for a metal. Probably responsible for energy coupling to the transport system. The polypeptide is Probable metal transport system ATP-binding protein TM_0124 (Thermotoga maritima (strain ATCC 43589 / DSM 3109 / JCM 10099 / NBRC 100826 / MSB8)).